The primary structure comprises 644 residues: Serine/threonine kinase YeaG (644 aa).

It belongs to the PrkA family. As to quaternary structure, monomer.

It is found in the cytoplasm. The enzyme catalyses L-seryl-[protein] + ATP = O-phospho-L-seryl-[protein] + ADP + H(+). It carries out the reaction L-threonyl-[protein] + ATP = O-phospho-L-threonyl-[protein] + ADP + H(+). Kinase that plays a role in the adaptation to sustained nitrogen starvation. The protein is Serine/threonine kinase YeaG (yeaG) of Escherichia coli O157:H7.